Consider the following 594-residue polypeptide: DNA mismatch repair protein MutL (594 aa).

The protein belongs to the DNA mismatch repair MutL/HexB family.

Its function is as follows. This protein is involved in the repair of mismatches in DNA. It is required for dam-dependent methyl-directed DNA mismatch repair. May act as a 'molecular matchmaker', a protein that promotes the formation of a stable complex between two or more DNA-binding proteins in an ATP-dependent manner without itself being part of a final effector complex. The polypeptide is DNA mismatch repair protein MutL (Rhizorhabdus wittichii (strain DSM 6014 / CCUG 31198 / JCM 15750 / NBRC 105917 / EY 4224 / RW1) (Sphingomonas wittichii)).